The primary structure comprises 684 residues: Suppressor of presenilin protein 3 (684 aa).

5 C2H2-type zinc fingers span residues 21–43, 48–71, 123–145, 261–283, and 291–313; these read YKCH…LRRH, FDCE…LQSH, YKCP…ILSH, YLCR…FRHH, and WTCI…VKMH. Disordered stretches follow at residues 337–359, 419–440, and 469–501; these read DLNK…HSDM, KNNS…SKSD, and TSKF…DQFQ. 2 C2H2-type zinc fingers span residues 590 to 612 and 618 to 641; these read RECT…RDKH and HTCP…FVDH. The disordered stretch occupies residues 652–684; it reads LPSSDSEDDNIPVPPDTPQRKKKAPKRGKRRGW. Basic residues predominate over residues 671 to 684; it reads RKKKAPKRGKRRGW.

It is found in the nucleus. Functionally, probable transcriptional regulator, which participates in the transcriptional repression of the presenilin protein hop-1. In Caenorhabditis elegans, this protein is Suppressor of presenilin protein 3 (spr-3).